A 159-amino-acid polypeptide reads, in one-letter code: SsrA-binding protein (159 aa).

This sequence belongs to the SmpB family.

The protein resides in the cytoplasm. Required for rescue of stalled ribosomes mediated by trans-translation. Binds to transfer-messenger RNA (tmRNA), required for stable association of tmRNA with ribosomes. tmRNA and SmpB together mimic tRNA shape, replacing the anticodon stem-loop with SmpB. tmRNA is encoded by the ssrA gene; the 2 termini fold to resemble tRNA(Ala) and it encodes a 'tag peptide', a short internal open reading frame. During trans-translation Ala-aminoacylated tmRNA acts like a tRNA, entering the A-site of stalled ribosomes, displacing the stalled mRNA. The ribosome then switches to translate the ORF on the tmRNA; the nascent peptide is terminated with the 'tag peptide' encoded by the tmRNA and targeted for degradation. The ribosome is freed to recommence translation, which seems to be the essential function of trans-translation. The sequence is that of SsrA-binding protein from Saccharophagus degradans (strain 2-40 / ATCC 43961 / DSM 17024).